Consider the following 250-residue polypeptide: Osmotin-like protein OSML15 (250 aa).

Residues 1–21 (MSHLTTCLVFFLLAFVTYTNA) form the signal peptide. Cystine bridges form between cysteine 31/cysteine 226, cysteine 73/cysteine 83, cysteine 88/cysteine 94, cysteine 142/cysteine 214, cysteine 147/cysteine 197, cysteine 155/cysteine 165, cysteine 169/cysteine 178, and cysteine 179/cysteine 184.

This sequence belongs to the thaumatin family.

This chain is Osmotin-like protein OSML15, found in Solanum commersonii (Commerson's wild potato).